A 144-amino-acid polypeptide reads, in one-letter code: Putative pre-16S rRNA nuclease (144 aa).

The protein belongs to the YqgF nuclease family.

It localises to the cytoplasm. Could be a nuclease involved in processing of the 5'-end of pre-16S rRNA. The polypeptide is Putative pre-16S rRNA nuclease (Prochlorococcus marinus (strain NATL1A)).